A 110-amino-acid chain; its full sequence is PHD finger-like domain-containing protein 5A (110 aa).

Ala-2 is subject to N-acetylalanine. N6-acetyllysine is present on Lys-3. Zn(2+) contacts are provided by Cys-11, Cys-23, Cys-26, Cys-30, Cys-33, Cys-46, Cys-49, Cys-58, Cys-61, Cys-72, and Cys-75. The segment at 35–51 (SYVRPCTLVRICDECNY) is interaction with SF3B1 and SF3B3. An interaction with SF3B3 region spans residues 79-82 (EKDR). Cys-85 serves as a coordination point for Zn(2+). Ser-94 carries the post-translational modification Phosphoserine.

This sequence belongs to the PHF5 family. Component of the 17S U2 SnRNP complex, a ribonucleoprotein complex that contains small nuclear RNA (snRNA) U2 and a number of specific proteins. Part of the SF3B subcomplex of the 17S U2 SnRNP complex. SF3B associates with the splicing subcomplex SF3A and a 12S RNA unit to form the U2 small nuclear ribonucleoproteins complex (U2 snRNP). Within the SF3B complex interacts directly with SF3B1 and SF3B3. Component of the minor spliceosome, which splices U12-type introns. Within this complex, interacts with CRIPT. Interacts (via N-terminus) with U2AF1 and SRSF5; acts to bridge the two. Interacts (via C-terminus) with EP400 and DDX1; acts to bridge the two. Interacts with the PAF1 complex (PAF1C) composed of CDC73, PAF1, LEO1, CTR9, RTF1 and SKIC8. Within the PAF1C interacts directly with CDC73 and SKIC8. Interacts with RNA polymerase II. Expressed in primary spermatocytes (at protein level). Ubiquitously expressed in pre- and postnatal tissues. Highly expressed in pluripotent embryonic stem cells (ESCs) (at protein level) and induced pluripotent stem cells (iPSCs).

The protein resides in the nucleus. It localises to the nucleus speckle. Its function is as follows. Component of the 17S U2 SnRNP complex of the spliceosome, a large ribonucleoprotein complex that removes introns from transcribed pre-mRNAs. The 17S U2 SnRNP complex (1) directly participates in early spliceosome assembly and (2) mediates recognition of the intron branch site during pre-mRNA splicing by promoting the selection of the pre-mRNA branch-site adenosine, the nucleophile for the first step of splicing. Within the 17S U2 SnRNP complex, PHF5A is part of the SF3B subcomplex, which is required for 'A' complex assembly formed by the stable binding of U2 snRNP to the branchpoint sequence in pre-mRNA. Sequence independent binding of SF3A and SF3B subcomplexes upstream of the branch site is essential, it may anchor U2 snRNP to the pre-mRNA. Also acts as a component of the minor spliceosome, which is involved in the splicing of U12-type introns in pre-mRNAs. Also involved in elongation by RNA polymerase II as part of the PAF1 complex (PAF1C). PAF1C is required for maintenance of embryonic stem cell (ESC) self-renewal and cellular reprogramming of stem cells. Maintains pluripotency by recruiting and stabilizing PAF1C on pluripotency genes loci, and by regulating the expression of the pluripotency genes. Regulates the deposition of elongation-associated histone modifications, including dimethylated histone H3 'Lys-79' (H3K79me2) and trimethylated histone H3 'Lys-36' (H3K36me3), on PAF1C targets, self-renewal and pluripotency genes. Regulates RNA polymerase II promoter-proximal pause release of the PAF1C targets and self-renewal genes, and the levels of elongating ('Ser-2' phosphorylated) RNA polymerase II in their gene bodies. Regulates muscle specification in adult stem cells by stabilizing PAF1C in chromatin to promote myogenic differentiation. Acts as a transcriptional regulator by binding to the GJA1/Cx43 promoter and enhancing its up-regulation by ESR1/ER-alpha. This Mus musculus (Mouse) protein is PHD finger-like domain-containing protein 5A (Phf5a).